Consider the following 105-residue polypeptide: Putative RNA-binding protein RbpF (105 aa).

An RRM domain is found at 2-79; sequence SIYVGNLSYE…RDLKVNKAKP (78 aa). A compositionally biased stretch (basic and acidic residues) spans 75–84; it reads NKAKPKEDRG. The tract at residues 75-105 is disordered; the sequence is NKAKPKEDRGSFGGGNRGGYGGGGGGGRSRY. The segment covering 85-105 has biased composition (gly residues); the sequence is SFGGGNRGGYGGGGGGGRSRY.

The protein is Putative RNA-binding protein RbpF (rbpF) of Nostoc sp. (strain PCC 7120 / SAG 25.82 / UTEX 2576).